The chain runs to 939 residues: Valine--tRNA ligase (939 aa).

The 'HIGH' region signature appears at Pro47–His57. The short motif at Lys563 to Ser567 is the 'KMSKS' region element. Residue Lys566 participates in ATP binding. The stretch at Ala873 to Leu939 forms a coiled coil.

This sequence belongs to the class-I aminoacyl-tRNA synthetase family. ValS type 1 subfamily. As to quaternary structure, monomer.

The protein resides in the cytoplasm. The catalysed reaction is tRNA(Val) + L-valine + ATP = L-valyl-tRNA(Val) + AMP + diphosphate. In terms of biological role, catalyzes the attachment of valine to tRNA(Val). As ValRS can inadvertently accommodate and process structurally similar amino acids such as threonine, to avoid such errors, it has a 'posttransfer' editing activity that hydrolyzes mischarged Thr-tRNA(Val) in a tRNA-dependent manner. The protein is Valine--tRNA ligase of Chlamydia muridarum (strain MoPn / Nigg).